Consider the following 696-residue polypeptide: Polyribonucleotide nucleotidyltransferase (696 aa).

Residues aspartate 489 and aspartate 495 each contribute to the Mg(2+) site. The 60-residue stretch at proline 556–isoleucine 615 folds into the KH domain. Residues glycine 625 to lysine 693 enclose the S1 motif domain.

It belongs to the polyribonucleotide nucleotidyltransferase family. Component of the RNA degradosome, which is a multiprotein complex involved in RNA processing and mRNA degradation. The cofactor is Mg(2+).

It localises to the cytoplasm. The enzyme catalyses RNA(n+1) + phosphate = RNA(n) + a ribonucleoside 5'-diphosphate. Functionally, involved in mRNA degradation. Catalyzes the phosphorolysis of single-stranded polyribonucleotides processively in the 3'- to 5'-direction. The protein is Polyribonucleotide nucleotidyltransferase of Coxiella burnetii (strain CbuG_Q212) (Coxiella burnetii (strain Q212)).